We begin with the raw amino-acid sequence, 487 residues long: Acetyl-coenzyme A carboxylase carboxyl transferase subunit beta, chloroplastic (487 aa).

Positions 223–487 (LWIQCDNCYG…FFPLKKNEIK (265 aa)) constitute a CoA carboxyltransferase N-terminal domain. Positions 227, 230, 243, and 246 each coordinate Zn(2+). The segment at 227-246 (CDNCYGLMYKKVKMNVCEQC) adopts a C4-type zinc-finger fold.

The protein belongs to the AccD/PCCB family. As to quaternary structure, acetyl-CoA carboxylase is a heterohexamer composed of biotin carboxyl carrier protein, biotin carboxylase and 2 subunits each of ACCase subunit alpha and ACCase plastid-coded subunit beta (accD). It depends on Zn(2+) as a cofactor.

Its subcellular location is the plastid. The protein resides in the chloroplast stroma. The enzyme catalyses N(6)-carboxybiotinyl-L-lysyl-[protein] + acetyl-CoA = N(6)-biotinyl-L-lysyl-[protein] + malonyl-CoA. Its pathway is lipid metabolism; malonyl-CoA biosynthesis; malonyl-CoA from acetyl-CoA: step 1/1. Its function is as follows. Component of the acetyl coenzyme A carboxylase (ACC) complex. Biotin carboxylase (BC) catalyzes the carboxylation of biotin on its carrier protein (BCCP) and then the CO(2) group is transferred by the transcarboxylase to acetyl-CoA to form malonyl-CoA. The sequence is that of Acetyl-coenzyme A carboxylase carboxyl transferase subunit beta, chloroplastic from Lepidium virginicum (Virginia pepperweed).